Reading from the N-terminus, the 126-residue chain is MSAYRQPVERYWWARRRSYLRFMLREISCIFVAWFVLYLVLVLRAVGAGGNSYQRFLDFSANPVVVVLNVVALSFLLLHAVTWFGSAPRAMVIQVRGRRVPARAVLAGHYAAWLVVSVIVAWMVLS.

The next 3 helical transmembrane spans lie at 30–50, 64–84, and 105–125; these read IFVA…GAGG, VVVV…VTWF, and VLAG…WMVL.

Belongs to the FrdC family. As to quaternary structure, part of an enzyme complex containing four subunits: a flavoprotein (FrdA), an iron-sulfur protein (FrdB), and two hydrophobic anchor proteins (FrdC and FrdD).

The protein localises to the cell membrane. Its function is as follows. Anchors the catalytic components of the fumarate reductase complex to the cell membrane, binds quinones. This is Fumarate reductase subunit C from Mycobacterium tuberculosis (strain CDC 1551 / Oshkosh).